A 563-amino-acid polypeptide reads, in one-letter code: Phosphomethylpyrimidine synthase (563 aa).

Positions 95-115 (PGKNPSPMNNRTPVRAKQGKS) are disordered. Substrate contacts are provided by residues N200, M229, Y258, H294, 314 to 316 (SRG), 355 to 358 (DALR), and E394. H398 provides a ligand contact to Zn(2+). Y421 provides a ligand contact to substrate. Residue H462 coordinates Zn(2+). 3 residues coordinate [4Fe-4S] cluster: C544, C547, and C552.

It belongs to the ThiC family. [4Fe-4S] cluster is required as a cofactor.

It carries out the reaction 5-amino-1-(5-phospho-beta-D-ribosyl)imidazole + S-adenosyl-L-methionine = 4-amino-2-methyl-5-(phosphooxymethyl)pyrimidine + CO + 5'-deoxyadenosine + formate + L-methionine + 3 H(+). It participates in cofactor biosynthesis; thiamine diphosphate biosynthesis. Functionally, catalyzes the synthesis of the hydroxymethylpyrimidine phosphate (HMP-P) moiety of thiamine from aminoimidazole ribotide (AIR) in a radical S-adenosyl-L-methionine (SAM)-dependent reaction. The protein is Phosphomethylpyrimidine synthase of Chlorobium phaeobacteroides (strain BS1).